The chain runs to 159 residues: RNA pyrophosphohydrolase (159 aa).

A Nudix hydrolase domain is found at 6–149; sequence GFRPNVGIIL…KREVYRRALK (144 aa). Positions 38 to 59 match the Nudix box motif; the sequence is GGINDRETPEEALYRELNEEVG.

Belongs to the Nudix hydrolase family. RppH subfamily. The cofactor is a divalent metal cation.

Its function is as follows. Accelerates the degradation of transcripts by removing pyrophosphate from the 5'-end of triphosphorylated RNA, leading to a more labile monophosphorylated state that can stimulate subsequent ribonuclease cleavage. The chain is RNA pyrophosphohydrolase from Pseudomonas aeruginosa (strain LESB58).